Here is a 127-residue protein sequence, read N- to C-terminus: Small ribosomal subunit protein uS12 (127 aa).

Positions 11-20 are enriched in basic residues; sequence GRKPKKKKSK. A disordered region spans residues 11–30; sequence GRKPKKKKSKAPALQGNPQK. Asp89 is modified (3-methylthioaspartic acid). The disordered stretch occupies residues 105–127; that stretch reads AGVEGRRQSRSKYGAKRPKDQKK. Over residues 112–127 the composition is skewed to basic residues; sequence QSRSKYGAKRPKDQKK.

Belongs to the universal ribosomal protein uS12 family. In terms of assembly, part of the 30S ribosomal subunit. Contacts proteins S8 and S17. May interact with IF1 in the 30S initiation complex.

Its function is as follows. With S4 and S5 plays an important role in translational accuracy. Functionally, interacts with and stabilizes bases of the 16S rRNA that are involved in tRNA selection in the A site and with the mRNA backbone. Located at the interface of the 30S and 50S subunits, it traverses the body of the 30S subunit contacting proteins on the other side and probably holding the rRNA structure together. The combined cluster of proteins S8, S12 and S17 appears to hold together the shoulder and platform of the 30S subunit. The chain is Small ribosomal subunit protein uS12 from Thermotoga maritima (strain ATCC 43589 / DSM 3109 / JCM 10099 / NBRC 100826 / MSB8).